A 133-amino-acid chain; its full sequence is Ribosome-binding factor A (133 aa).

The protein belongs to the RbfA family. In terms of assembly, monomer. Binds 30S ribosomal subunits, but not 50S ribosomal subunits or 70S ribosomes.

The protein localises to the cytoplasm. In terms of biological role, one of several proteins that assist in the late maturation steps of the functional core of the 30S ribosomal subunit. Associates with free 30S ribosomal subunits (but not with 30S subunits that are part of 70S ribosomes or polysomes). Required for efficient processing of 16S rRNA. May interact with the 5'-terminal helix region of 16S rRNA. In Salmonella typhimurium (strain LT2 / SGSC1412 / ATCC 700720), this protein is Ribosome-binding factor A.